Consider the following 157-residue polypeptide: Ubiquitin-like protein 4A (157 aa).

One can recognise a Ubiquitin-like domain in the interval 1-76 (MQLTVKALQG…LNLVVKPLEK (76 aa)). Lysine 48 is covalently cross-linked (Glycyl lysine isopeptide (Lys-Gly) (interchain with G-Cter in ubiquitin)). The residue at position 90 (serine 90) is a Phosphoserine. The tract at residues 96-138 (WQLISKVLARHFSAADASRVLEQLQRDYQRSLSRLTLDDIERL) is required and sufficient for interaction with BAG6.

In terms of assembly, component of the BAG6/BAT3 complex, at least composed of BAG6, UBL4A and GET4/TRC35. Interacts with BAG6; the interaction is direct and required for UBL4A protein stability. Interacts with USP13; may be indirect via BAG6. In terms of processing, polyubiquitinated. Ubiquitination by AMFR and deubiquitination by USP13 may regulate the interaction between the BAG6/BAT complex and SGTA and therefore may regulate client proteins fate.

The protein resides in the cytoplasm. Its subcellular location is the cytosol. It is found in the nucleus. Its function is as follows. As part of a cytosolic protein quality control complex, the BAG6/BAT3 complex, maintains misfolded and hydrophobic patches-containing proteins in a soluble state and participates in their proper delivery to the endoplasmic reticulum or alternatively can promote their sorting to the proteasome where they undergo degradation. The BAG6/BAT3 complex is involved in the post-translational delivery of tail-anchored/type II transmembrane proteins to the endoplasmic reticulum membrane. Recruited to ribosomes, it interacts with the transmembrane region of newly synthesized tail-anchored proteins and together with SGTA and ASNA1 mediates their delivery to the endoplasmic reticulum. Client proteins that cannot be properly delivered to the endoplasmic reticulum are ubiquitinated and sorted to the proteasome. Similarly, the BAG6/BAT3 complex also functions as a sorting platform for proteins of the secretory pathway that are mislocalized to the cytosol either delivering them to the proteasome for degradation or to the endoplasmic reticulum. The BAG6/BAT3 complex also plays a role in the endoplasmic reticulum-associated degradation (ERAD), a quality control mechanism that eliminates unwanted proteins of the endoplasmic reticulum through their retrotranslocation to the cytosol and their targeting to the proteasome. It maintains these retrotranslocated proteins in an unfolded yet soluble state condition in the cytosol to ensure their proper delivery to the proteasome. The protein is Ubiquitin-like protein 4A (UBL4A) of Plecturocebus moloch (Dusky titi monkey).